We begin with the raw amino-acid sequence, 111 residues long: UPF0122 protein CKR_1296 (111 aa).

The protein belongs to the UPF0122 family.

Its function is as follows. Might take part in the signal recognition particle (SRP) pathway. This is inferred from the conservation of its genetic proximity to ftsY/ffh. May be a regulatory protein. The chain is UPF0122 protein CKR_1296 from Clostridium kluyveri (strain NBRC 12016).